A 207-amino-acid polypeptide reads, in one-letter code: Glycerol-3-phosphate acyltransferase (207 aa).

5 consecutive transmembrane segments (helical) span residues 3–23 (LIGL…VWVG), 54–74 (TIVM…PIVF), 81–101 (GTAT…VSIF), 122–142 (PIMF…TSIV), and 158–178 (LVFQ…FVFY).

The protein belongs to the PlsY family. In terms of assembly, probably interacts with PlsX.

The protein localises to the cell membrane. The enzyme catalyses an acyl phosphate + sn-glycerol 3-phosphate = a 1-acyl-sn-glycero-3-phosphate + phosphate. Its pathway is lipid metabolism; phospholipid metabolism. Its function is as follows. Catalyzes the transfer of an acyl group from acyl-phosphate (acyl-PO(4)) to glycerol-3-phosphate (G3P) to form lysophosphatidic acid (LPA). This enzyme utilizes acyl-phosphate as fatty acyl donor, but not acyl-CoA or acyl-ACP. The chain is Glycerol-3-phosphate acyltransferase from Levilactobacillus brevis (strain ATCC 367 / BCRC 12310 / CIP 105137 / JCM 1170 / LMG 11437 / NCIMB 947 / NCTC 947) (Lactobacillus brevis).